Here is a 332-residue protein sequence, read N- to C-terminus: Protein FAM9A (332 aa).

A compositionally biased stretch (basic residues) spans 1–13 (MEPVGRKRSRKAA). Disordered stretches follow at residues 1-114 (MEPV…EHTG) and 186-293 (QKDD…PTGV). Basic and acidic residues-rich tracts occupy residues 74-91 (GKDPVRDECEERNPFTET) and 98-114 (DEHGEREPFAEKDEHTG). The span at 196–217 (AAAAAAEAAAAAEAAAAAAEVI) shows a compositional bias: low complexity. Over residues 218-275 (VVEDEEEEEKEEEEEKEEEEEEGEEEGGGEEGEEGGGGGEGEETEEEEEEEEEEEEEE) the composition is skewed to acidic residues. The span at 276–285 (QIKAFQEKQK) shows a compositional bias: basic and acidic residues.

It belongs to the XLR/SYCP3 family. Expressed exclusively in testis.

The protein localises to the nucleus. It localises to the nucleolus. The polypeptide is Protein FAM9A (Homo sapiens (Human)).